A 160-amino-acid chain; its full sequence is SsrA-binding protein (160 aa).

Residues 132-160 (KIHDKRDDMQKKDAQQEIARALKSSNRYE) are disordered. Basic and acidic residues predominate over residues 135–146 (DKRDDMQKKDAQ).

It belongs to the SmpB family.

The protein resides in the cytoplasm. In terms of biological role, required for rescue of stalled ribosomes mediated by trans-translation. Binds to transfer-messenger RNA (tmRNA), required for stable association of tmRNA with ribosomes. tmRNA and SmpB together mimic tRNA shape, replacing the anticodon stem-loop with SmpB. tmRNA is encoded by the ssrA gene; the 2 termini fold to resemble tRNA(Ala) and it encodes a 'tag peptide', a short internal open reading frame. During trans-translation Ala-aminoacylated tmRNA acts like a tRNA, entering the A-site of stalled ribosomes, displacing the stalled mRNA. The ribosome then switches to translate the ORF on the tmRNA; the nascent peptide is terminated with the 'tag peptide' encoded by the tmRNA and targeted for degradation. The ribosome is freed to recommence translation, which seems to be the essential function of trans-translation. The chain is SsrA-binding protein from Leptospira borgpetersenii serovar Hardjo-bovis (strain JB197).